The sequence spans 539 residues: Acid-sensing ion channel 4 (539 aa).

At 1–68 (MPIEIVCKIK…GPGPHGLRRT (68 aa)) the chain is on the cytoplasmic side. Residues 69 to 89 (LWALALLTSLAAFLYQAAGLA) form a helical membrane-spanning segment. Topologically, residues 90-438 (RGYLTRPHLV…EQRAAYGLSA (349 aa)) are extracellular. Intrachain disulfides connect cysteine 118–cysteine 202 and cysteine 180–cysteine 187. N-linked (GlcNAc...) asparagine glycosylation is found at asparagine 191 and asparagine 243. Intrachain disulfides connect cysteine 296/cysteine 375, cysteine 318/cysteine 371, cysteine 322/cysteine 369, cysteine 331/cysteine 353, and cysteine 333/cysteine 345. Asparagine 376 carries an N-linked (GlcNAc...) asparagine glycan. A helical membrane pass occupies residues 439-459 (LLGDLGGQMGLFIGASILTLL). Positions 452–454 (GAS) match the GAS motif; ion selectivity filter motif. The Cytoplasmic portion of the chain corresponds to 460-539 (EILDYIYEVS…PGGLFEDFAC (80 aa)). Positions 501 to 531 (EQSPCPSRGRVEGGGVSSLLPNHHHPHGPPG) are disordered.

The protein belongs to the amiloride-sensitive sodium channel (TC 1.A.6) family. ASIC4 subfamily. As to quaternary structure, homotrimer. Heterotrimer; with other ASIC proteins producing functional channels. As to expression, expressed in pituitary gland. Weakly expressed in brain, vestibular system and organ of Corti.

It localises to the cell membrane. Does not exhibit measurable stand-alone pH-gated sodium channel activity but may form pH-gated heterotrimeric sodium channels. Its activity could also depend on alternative gating mechanisms. The chain is Acid-sensing ion channel 4 from Homo sapiens (Human).